We begin with the raw amino-acid sequence, 172 residues long: Protein-export protein SecB (172 aa).

This sequence belongs to the SecB family. As to quaternary structure, homotetramer, a dimer of dimers. One homotetramer interacts with 1 SecA dimer.

The protein localises to the cytoplasm. In terms of biological role, one of the proteins required for the normal export of preproteins out of the cell cytoplasm. It is a molecular chaperone that binds to a subset of precursor proteins, maintaining them in a translocation-competent state. It also specifically binds to its receptor SecA. This is Protein-export protein SecB from Cupriavidus pinatubonensis (strain JMP 134 / LMG 1197) (Cupriavidus necator (strain JMP 134)).